We begin with the raw amino-acid sequence, 187 residues long: Calcium and integrin-binding family member 3 (187 aa).

EF-hand domains lie at 66–101 (KDNP…MSEM), 103–138 (PRDL…LTRG), and 144–179 (EVSL…APDF). Ca(2+) contacts are provided by D116, N118, D120, Y122, D127, D157, D159, D161, R163, and D168.

Monomer and homodimer. Interacts with ITGA2B (via C-terminus cytoplasmic tail region); the interaction is stabilized/increased in a calcium and magnesium-dependent manner. Interacts with TMC1.

Its function is as follows. Acts a an auxiliary subunit of the sensory mechanoelectrical transduction (MET) channel in hair cells. Plays a role in regulating hair cell MET channel localization and function. In Homo sapiens (Human), this protein is Calcium and integrin-binding family member 3 (CIB3).